Here is a 742-residue protein sequence, read N- to C-terminus: G2/M phase-specific E3 ubiquitin-protein ligase (742 aa).

The C2HC pre-PHD-type zinc-finger motif lies at 10–50 (SPPCVLCGWTDNCPEKYGEKRTYVEYNLTLHNYCLLMSSGI). The segment at 78 to 127 (LMCNICRKKGASIGCVAPKCKRSYHFPCGLQKECVFQFMEDFRSYCWEHK) adopts a PHD-type 1 zinc-finger fold. A PHD-type 2; degenerate zinc finger spans residues 142-192 (QCTICLDLVEHLPLYSVLRSPCCKNTWFHRECLQYQALSAGIFFFRCAVCN). The PHD-type 3 zinc-finger motif lies at 236 to 285 (RCLCKNGRDYNKPDSKWEIKRCQSCGSRGTHLACSSIKSWEQNWECVECR). Positions 417 to 742 (KGFRQRNFRP…IRSTLRGERE (326 aa)) constitute an HECT domain.

The protein localises to the nucleus. The protein resides in the nucleolus. It localises to the cytoplasm. The catalysed reaction is S-ubiquitinyl-[E2 ubiquitin-conjugating enzyme]-L-cysteine + [acceptor protein]-L-lysine = [E2 ubiquitin-conjugating enzyme]-L-cysteine + N(6)-ubiquitinyl-[acceptor protein]-L-lysine.. It participates in protein modification; protein ubiquitination. In terms of biological role, E3 ubiquitin-protein ligase which accepts ubiquitin from an E2 ubiquitin-conjugating enzyme in the form of a thioester and then directly transfers the ubiquitin to targeted substrates. Essential in early embryonic development to prevent apoptotic death. The protein is G2/M phase-specific E3 ubiquitin-protein ligase (G2E3) of Gallus gallus (Chicken).